A 372-amino-acid polypeptide reads, in one-letter code: Chaperone protein DnaJ (372 aa).

Positions 5-70 (DYYDLLEVGR…EKRAGYDRYG (66 aa)) constitute a J domain. The CR-type zinc-finger motif lies at 134-212 (GIQAPIHYVT…CGGSGRRRDE (79 aa)). Zn(2+) is bound by residues C147, C150, C164, C167, C186, C189, C200, and C203. CXXCXGXG motif repeat units follow at residues 147-154 (CDTCQGTG), 164-171 (CHTCQGSG), 186-193 (CTTCYGEG), and 200-207 (CKKCGGSG).

The protein belongs to the DnaJ family. Homodimer. It depends on Zn(2+) as a cofactor.

It localises to the cytoplasm. Its function is as follows. Participates actively in the response to hyperosmotic and heat shock by preventing the aggregation of stress-denatured proteins and by disaggregating proteins, also in an autonomous, DnaK-independent fashion. Unfolded proteins bind initially to DnaJ; upon interaction with the DnaJ-bound protein, DnaK hydrolyzes its bound ATP, resulting in the formation of a stable complex. GrpE releases ADP from DnaK; ATP binding to DnaK triggers the release of the substrate protein, thus completing the reaction cycle. Several rounds of ATP-dependent interactions between DnaJ, DnaK and GrpE are required for fully efficient folding. Also involved, together with DnaK and GrpE, in the DNA replication of plasmids through activation of initiation proteins. This is Chaperone protein DnaJ from Wolbachia pipientis wMel.